The following is a 381-amino-acid chain: Heme A synthase (381 aa).

A disordered region spans residues methionine 1–glycine 23. The segment covering threonine 11–glycine 23 has biased composition (low complexity). 8 helical membrane-spanning segments follow: residues glycine 34 to glycine 54, arginine 120 to threonine 140, leucine 151 to serine 171, leucine 185 to alanine 205, threonine 228 to isoleucine 248, leucine 285 to phenylalanine 305, alanine 319 to leucine 339, and serine 342 to leucine 362. Residue histidine 290 coordinates heme. Residue histidine 350 participates in heme binding.

It belongs to the COX15/CtaA family. Type 2 subfamily. As to quaternary structure, interacts with CtaB. The cofactor is heme b.

The protein localises to the cell membrane. The catalysed reaction is Fe(II)-heme o + 2 A + H2O = Fe(II)-heme a + 2 AH2. It participates in porphyrin-containing compound metabolism; heme A biosynthesis; heme A from heme O: step 1/1. Functionally, catalyzes the conversion of heme O to heme A by two successive hydroxylations of the methyl group at C8. The first hydroxylation forms heme I, the second hydroxylation results in an unstable dihydroxymethyl group, which spontaneously dehydrates, resulting in the formyl group of heme A. The chain is Heme A synthase from Paracoccus denitrificans (strain Pd 1222).